Here is a 469-residue protein sequence, read N- to C-terminus: Cytosolic beta-glucosidase (469 aa).

Residues Gln-17, His-120, and Asn-164 each coordinate substrate. Glu-165 functions as the Proton donor in the catalytic mechanism. Tyr-309 contacts substrate. Glu-373 acts as the Nucleophile in catalysis. Residues Trp-417 and 424-425 each bind substrate; that span reads EW.

The protein belongs to the glycosyl hydrolase 1 family. Klotho subfamily. Post-translationally, the N-terminus is blocked. Present in hepatocytes (at protein level).

The protein resides in the cytoplasm. The protein localises to the cytosol. The enzyme catalyses Hydrolysis of terminal, non-reducing beta-D-glucosyl residues with release of beta-D-glucose.. It carries out the reaction a beta-D-glucosyl-(1&lt;-&gt;1')-N-acylsphing-4-enine + H2O = an N-acylsphing-4-enine + D-glucose. The catalysed reaction is a beta-D-galactosyl-(1&lt;-&gt;1')-N-acylsphing-4-enine + H2O = an N-acylsphing-4-enine + D-galactose. It catalyses the reaction beta-D-glucosyl-(1&lt;-&gt;1)-sphing-4-enine + H2O = sphing-4-enine + D-glucose. The enzyme catalyses beta-D-glucosyl-(1&lt;-&gt;1)-N-octadecanoylsphing-4-enine + H2O = N-octadecanoylsphing-4-enine + D-glucose. It carries out the reaction beta-D-galactosyl-(1&lt;-&gt;1)-sphing-4-enine + H2O = sphing-4-enine + D-galactose. The catalysed reaction is beta-D-galactosyl-(1&lt;-&gt;1')-N-octadecanoylsphing-4-enine + H2O = N-octadecanoylsphing-4-enine + D-galactose. It catalyses the reaction a beta-D-xylosyl-(1&lt;-&gt;1')-N-acylsphing-4-enine + cholesterol = cholesteryl 3-beta-D-xyloside + an N-acylsphing-4-enine. Inhibited by 2,4-dinitrophenyl-2-fluoro-2-deoxy-beta-D-glucopyranoside. In terms of biological role, neutral cytosolic beta-glycosidase with a broad substrate specificity that could play a role in the catabolism of glycosylceramides. Has a significant glucosylceramidase activity in vitro. However, that activity is relatively low and its significance in vivo is not clear. Hydrolyzes galactosylceramide/GalCer, glucosylsphingosine/GlcSph and galactosylsphingosine/GalSph. However, the in vivo relevance of these activities is unclear. It can also hydrolyze a broad variety of dietary glycosides including phytoestrogens, flavonols, flavones, flavanones and cyanogens in vitro and could therefore play a role in the metabolism of xenobiotics. Possesses transxylosylase activity in vitro using xylosylated ceramides/XylCers (such as beta-D-xylosyl-(1&lt;-&gt;1')-N-acylsphing-4-enine) as xylosyl donors and cholesterol as acceptor. Could also play a role in the catabolism of cytosolic sialyl free N-glycans. The protein is Cytosolic beta-glucosidase of Cavia porcellus (Guinea pig).